The chain runs to 215 residues: Sodium channel regulatory subunit beta-2 (215 aa).

Residues 1–29 (MHRDAWLPRPAFSLTGLSLFFSLVPPGRS) form the signal peptide. The Extracellular segment spans residues 30 to 157 (MEVTAPTTLS…LEVPPERDST (128 aa)). The region spanning 32–154 (VTAPTTLSVL…QVLLEVPPER (123 aa)) is the Ig-like C2-type domain. Asn42, Asn66, and Asn74 each carry an N-linked (GlcNAc...) asparagine glycan. 2 disulfide bridges follow: Cys50-Cys127 and Cys72-Cys75. A helical membrane pass occupies residues 158 to 179 (VAVIVGASVGGFLAVVILVLMV). Residues 180 to 215 (VKCVRRKKEQKLSTDDLKTEEEGKMDGEGNAEDGTK) are Cytoplasmic-facing. A disordered region spans residues 188 to 215 (EQKLSTDDLKTEEEGKMDGEGNAEDGTK). Residues 189-215 (QKLSTDDLKTEEEGKMDGEGNAEDGTK) show a composition bias toward basic and acidic residues. The residue at position 192 (Ser192) is a Phosphoserine.

Belongs to the sodium channel auxiliary subunit SCN2B (TC 8.A.17) family. In terms of assembly, a voltage-gated sodium (Nav) channel consists of an ion-conducting pore-forming alpha subunit functional on its own that is regulated by one or more beta subunits. The beta subunit SCN2B is disulfide-linked to the pore-forming alpha subunit. Interacts with SCN1A; regulatory subunit of SCN1A/Nav1.1. Interacts with SCN2A; regulatory subunit of SCN2A/Nav1.2. Interacts with SCN3A; regulatory subunit of SCN3A/Nav1.3. Interacts with SCN5A; regulatory subunit of SCN5A/Nav1.5. Interacts with SCN8A; regulatory subunit of SCN8A/Nav1.6. Interacts with SCN9A; regulatory subunit of SCN9A/Nav1.7. Interacts with SCN10A; regulatory subunit of SCN10A/Nav1.8. Interacts with TNR; may play a crucial role in clustering and regulation of activity of SCN2B-containing Nav channels at nodes of Ranvier.

The protein resides in the cell membrane. It is found in the cell projection. It localises to the axon. Functionally, regulatory subunit of multiple voltage-gated sodium (Nav) channels directly mediating the depolarization of excitable membranes. Navs, also called VGSCs (voltage-gated sodium channels) or VDSCs (voltage-dependent sodium channels), operate by switching between closed and open conformations depending on the voltage difference across the membrane. In the open conformation they allow Na(+) ions to selectively pass through the pore, along their electrochemical gradient. The influx of Na+ ions provokes membrane depolarization, initiating the propagation of electrical signals throughout cells and tissues. The accessory beta subunits participate in localization and functional modulation of the Nav channels. Modulates the activity of SCN1A/Nav1.1, SCN2A/Nav1.2, SCN2A/Nav1.3, SCN5A/Nav1.5, SCN8A/Nav1.6, SCN9A/Nav1.7 and SCN10A/Nav1.8. In Mus musculus (Mouse), this protein is Sodium channel regulatory subunit beta-2.